A 199-amino-acid chain; its full sequence is MKITALLVLKCDPETREPVILANVSDLSQFGKFSFYRSNFEEFIVFIARTVARRTPPGQRQSVKHEEYKVHAYNINGLCAVGFMDDHYPVRSAFSLLNQVLDVYQKDYGDTWRFENSSQPWPYLKEASDKFRDPAEADKLLKIQRELDETKIILHKTIDGVLARGEKLDSLVEKSSELSLASKMFYKQAKKTNSCCTLL.

The 125-residue stretch at 7–131 folds into the Longin domain; it reads LVLKCDPETR…PYLKEASDKF (125 aa). The region spanning 139 to 199 is the v-SNARE coiled-coil homology domain; the sequence is KLLKIQRELD…KKTNSCCTLL (61 aa). The S-palmitoyl cysteine moiety is linked to residue C195. C196 is subject to Cysteine methyl ester. C196 carries the S-geranylgeranyl cysteine lipid modification. Positions 197–199 are cleaved as a propeptide — removed in mature form; that stretch reads TLL.

Belongs to the synaptobrevin family. As to quaternary structure, interacts with SYP41. Core constituent of the SNARE complex required for membrane fusion at the trans-Golgi network.

The protein resides in the cell membrane. Its function is as follows. Involved in the secretory pathway. Essential for membrane fusion mediated by either SYP41 or SYP61; triggers the fusion of phospholipid vesicles containing SYP41 or SYP61 and VTI12. The chain is VAMP-like protein YKT62 from Arabidopsis thaliana (Mouse-ear cress).